Here is a 183-residue protein sequence, read N- to C-terminus: MDIDPYKEFGASVELLSFLPSDFFPSIRDLLDTASALYREALESPEHCSPHHTALRQAILCWGELMNLATWVGSNLEDPASRELVVSYVNVNMGLKIRQLLWFHISCLTFGRETVLEYLVSFGVWIRTPPAYRPPNAPILSTLPETTVVRRRGRSPRRRTPSPRRRRSQSPRRRRSQSRESQC.

A disordered region spans residues N136–C183. Residues V149 to S176 show a composition bias toward basic residues. S155, S162, and S170 each carry phosphoserine; by host. A 1; half-length repeat occupies S155–P161. A 3 X 8 AA repeats of S-P-R-R-R-[PR]-S-Q region spans residues S155–Q177. A Bipartite nuclear localization signal motif is present at residues R158–R175. A run of 2 repeats spans residues S162–Q169 and S170–Q177. The tract at residues Q177 to C183 is RNA binding.

Belongs to the orthohepadnavirus core antigen family. Homodimerizes, then multimerizes. Interacts with cytosol exposed regions of viral L glycoprotein present in the reticulum-to-Golgi compartment. Interacts with human FLNB. Phosphorylated form interacts with host importin alpha; this interaction depends on the exposure of the NLS, which itself depends upon genome maturation and/or phosphorylation of the capsid protein. Interacts with host NUP153. In terms of processing, phosphorylated by host SRPK1, SRPK2, and maybe protein kinase C or GAPDH. Phosphorylation is critical for pregenomic RNA packaging. Protein kinase C phosphorylation is stimulated by HBx protein and may play a role in transport of the viral genome to the nucleus at the late step during the viral replication cycle.

The protein resides in the virion. It is found in the host cytoplasm. Self assembles to form an icosahedral capsid. Most capsids appear to be large particles with an icosahedral symmetry of T=4 and consist of 240 copies of capsid protein, though a fraction forms smaller T=3 particles consisting of 180 capsid proteins. Entering capsids are transported along microtubules to the nucleus. Phosphorylation of the capsid is thought to induce exposure of nuclear localization signal in the C-terminal portion of the capsid protein that allows binding to the nuclear pore complex via the importin (karyopherin-) alpha and beta. Capsids are imported in intact form through the nuclear pore into the nuclear basket, where it probably binds NUP153. Only capsids that contain the mature viral genome can release the viral DNA and capsid protein into the nucleoplasm. Immature capsids get stuck in the basket. Capsids encapsulate the pre-genomic RNA and the P protein. Pre-genomic RNA is reverse-transcribed into DNA while the capsid is still in the cytoplasm. The capsid can then either be directed to the nucleus, providing more genomes for transcription, or bud through the endoplasmic reticulum to provide new virions. This chain is Capsid protein, found in Hepatitis B virus genotype B2 (isolate Indonesia/pIDW420/1988) (HBV-B).